Consider the following 155-residue polypeptide: 3-hydroxyacyl-[acyl-carrier-protein] dehydratase FabZ (155 aa).

Residue His58 is part of the active site.

Belongs to the thioester dehydratase family. FabZ subfamily.

The protein resides in the cytoplasm. It catalyses the reaction a (3R)-hydroxyacyl-[ACP] = a (2E)-enoyl-[ACP] + H2O. Functionally, involved in unsaturated fatty acids biosynthesis. Catalyzes the dehydration of short chain beta-hydroxyacyl-ACPs and long chain saturated and unsaturated beta-hydroxyacyl-ACPs. The chain is 3-hydroxyacyl-[acyl-carrier-protein] dehydratase FabZ from Rhizobium johnstonii (strain DSM 114642 / LMG 32736 / 3841) (Rhizobium leguminosarum bv. viciae).